The chain runs to 89 residues: Small ribosomal subunit protein uS15 (89 aa).

A disordered region spans residues 1–25 (MSLDTTEKQQLINTHQTHGTDTGSA). A compositionally biased stretch (polar residues) spans 8–25 (KQQLINTHQTHGTDTGSA).

It belongs to the universal ribosomal protein uS15 family. As to quaternary structure, part of the 30S ribosomal subunit. Forms a bridge to the 50S subunit in the 70S ribosome, contacting the 23S rRNA.

Functionally, one of the primary rRNA binding proteins, it binds directly to 16S rRNA where it helps nucleate assembly of the platform of the 30S subunit by binding and bridging several RNA helices of the 16S rRNA. Forms an intersubunit bridge (bridge B4) with the 23S rRNA of the 50S subunit in the ribosome. The protein is Small ribosomal subunit protein uS15 of Parasynechococcus marenigrum (strain WH8102).